A 593-amino-acid polypeptide reads, in one-letter code: Arginine--tRNA ligase (593 aa).

Positions 138-148 match the 'HIGH' region motif; the sequence is ANPTGPLHVGH.

Belongs to the class-I aminoacyl-tRNA synthetase family. As to quaternary structure, monomer.

The protein localises to the cytoplasm. The catalysed reaction is tRNA(Arg) + L-arginine + ATP = L-arginyl-tRNA(Arg) + AMP + diphosphate. The polypeptide is Arginine--tRNA ligase (Burkholderia vietnamiensis (strain G4 / LMG 22486) (Burkholderia cepacia (strain R1808))).